A 511-amino-acid polypeptide reads, in one-letter code: Cytochrome P450 monooxygenase cypX (511 aa).

Residues 18–38 (LPFSLALVAAAFVLYNIVSII) traverse the membrane as a helical segment. N-linked (GlcNAc...) asparagine glycosylation is found at Asn-162 and Asn-407. Residue Cys-454 coordinates heme.

It belongs to the cytochrome P450 family. It depends on heme as a cofactor.

It is found in the membrane. It participates in mycotoxin biosynthesis. Its function is as follows. Cytochrome P450 monooxygenase; part of the fragmented gene cluster that mediates the biosynthesis of dothistromin (DOTH), a polyketide toxin very similar in structure to the aflatoxin precursor, versicolorin B. The first step of the pathway is the conversion of acetate to norsolorinic acid (NOR) and requires the fatty acid synthase subunits hexA and hexB, as well as the polyketide synthase pksA. PksA combines a hexanoyl starter unit and 7 malonyl-CoA extender units to synthesize the precursor NOR. The hexanoyl starter unit is provided to the acyl-carrier protein (ACP) domain by the fungal fatty acid synthase hexA/hexB. The second step is the conversion of NOR to averantin (AVN) and requires the norsolorinic acid ketoreductase nor1, which catalyzes the dehydration of norsolorinic acid to form (1'S)-averantin. The cytochrome P450 monooxygenase avnA then catalyzes the hydroxylation of AVN to 5'hydroxyaverantin (HAVN). The next step is performed by adhA that transforms HAVN to averufin (AVF). Averufin might then be converted to hydroxyversicolorone by cypX and avfA. Hydroxyversicolorone is further converted versiconal hemiacetal acetate (VHA) by moxY. VHA is then the substrate for the versiconal hemiacetal acetate esterase est1 to yield versiconal (VAL). Versicolorin B synthase vbsA then converts VAL to versicolorin B (VERB) by closing the bisfuran ring. Then, the activity of the versicolorin B desaturase verB leads to versicolorin A (VERA). DotB, a predicted chloroperoxidase, may perform epoxidation of the A-ring of VERA. Alternatively, a cytochrome P450, such as cypX or avnA could catalyze this step. It is also possible that another, uncharacterized, cytochrome P450 enzyme is responsible for this step. Opening of the epoxide could potentially be achieved by the epoxide hydrolase epoA. However, epoA seems not to be required for DOTH biosynthesis, but other epoxide hydrolases may have the ability to complement this hydrolysis. Alternatively, opening of the epoxide ring could be achieved non-enzymatically. The next step is the deoxygenation of ring A to yield the 5,8-dihydroxyanthraquinone which is most likely catalyzed by the NADPH dehydrogenase encoded by ver1. The last stages of DOTH biosynthesis are proposed to involve hydroxylation of the bisfuran. OrdB and norB might have oxidative roles here. An alternative possibility is that cytochrome P450 monoogenases such as avnA and cypX might perform these steps in addition to previously proposed steps. The chain is Cytochrome P450 monooxygenase cypX from Dothistroma septosporum (Red band needle blight fungus).